The following is a 470-amino-acid chain: Uronate isomerase (470 aa).

This sequence belongs to the metallo-dependent hydrolases superfamily. Uronate isomerase family.

It carries out the reaction D-glucuronate = D-fructuronate. It catalyses the reaction aldehydo-D-galacturonate = keto-D-tagaturonate. It participates in carbohydrate metabolism; pentose and glucuronate interconversion. This Escherichia fergusonii (strain ATCC 35469 / DSM 13698 / CCUG 18766 / IAM 14443 / JCM 21226 / LMG 7866 / NBRC 102419 / NCTC 12128 / CDC 0568-73) protein is Uronate isomerase.